Reading from the N-terminus, the 308-residue chain is Taste receptor type 2 member 43 (308 aa).

M1 is a topological domain (extracellular). A helical transmembrane segment spans residues 2-22 (ITFLPIIFSILVVVTFVIGNC). At 23–46 (ANGFIALVNSTEWVKRQKISFADQ) the chain is on the cytoplasmic side. A helical membrane pass occupies residues 47 to 67 (ILTALAVSRVGLLWVLLLNWY). Residues 68-86 (ATVLNPAFYSVEVRTIVYN) lie on the Extracellular side of the membrane. A helical transmembrane segment spans residues 87-107 (LWAVINHFSNWLATSLSIFYL). Residues 108 to 126 (LKIANFSNLIFLHLKRRVK) are Cytoplasmic-facing. The chain crosses the membrane as a helical span at residues 127–147 (SVVLVILLGPLLFLVCHLFVV). The Extracellular segment spans residues 148 to 178 (NMNEIVRTKEYEGNMTWKSKLRSAMYLSNTT). N161 and N176 each carry an N-linked (GlcNAc...) asparagine glycan. The helical transmembrane segment at 179–199 (VTILANLVPFILTLISFLLLI) threads the bilayer. Residues 200–229 (CSLCKHLKKMQLRDKGSQDPSTKVHIKALQ) are Cytoplasmic-facing. The helical transmembrane segment at 230–249 (TVISLLLCVIYFLSIMISSW) threads the bilayer. Over 250–258 (SLGRVENKA) the chain is Extracellular. The chain crosses the membrane as a helical span at residues 259–279 (VFMFCKAIRFSYPSAHAFILI). The Cytoplasmic segment spans residues 280-308 (WGNKKLKQTLLSVLWNVRYCVKGQKLPSP).

This sequence belongs to the G-protein coupled receptor T2R family.

Its subcellular location is the membrane. It localises to the cell projection. The protein localises to the cilium membrane. In terms of biological role, gustducin-coupled receptor immplicated in the perception of bitter compounds in the oral cavity and the gastrointestinal tract. Signals through PLCB2 and the calcium-regulated cation channel TRPM5. Activated by the sulfonyl amide sweeteners saccharin and acesulfame K. In airway epithelial cells, binding of bitter compounds increases the intracellular calcium ion concentration and stimulates ciliary beat frequency. May act as chemosensory receptors in airway epithelial cells to detect and eliminate potential noxious agents from the airways. This chain is Taste receptor type 2 member 43 (TAS2R43), found in Papio hamadryas (Hamadryas baboon).